The sequence spans 370 residues: Glutamine synthetase (370 aa).

The region spanning Val23–Gly102 is the GS beta-grasp domain. The tract at residues Cys40–His69 is disordered. In terms of domain architecture, GS catalytic spans His109–Asp370.

This sequence belongs to the glutamine synthetase family. In terms of assembly, homooctamer.

Its subcellular location is the cytoplasm. It catalyses the reaction L-glutamate + NH4(+) + ATP = L-glutamine + ADP + phosphate + H(+). In Debaryomyces hansenii (strain ATCC 36239 / CBS 767 / BCRC 21394 / JCM 1990 / NBRC 0083 / IGC 2968) (Yeast), this protein is Glutamine synthetase (GLN1).